The chain runs to 165 residues: Probable DNA polymerase III subunit chi (165 aa).

This sequence belongs to the DNA polymerase III chi/HolC chain family. As to quaternary structure, DNA polymerase III contains a core (composed of alpha, epsilon and theta chains) that associates with a tau subunit. This core dimerizes to form the POLIII' complex. PolIII' associates with the gamma complex (composed of gamma, delta, delta', psi and chi chains) and with the beta chain to form the complete DNA polymerase III complex. Interacts directly with the psi subunit (holD). The only subunit of the DNA polymerase III holoenzyme known to interact with single-stranded DNA binding protein (SSB).

It catalyses the reaction DNA(n) + a 2'-deoxyribonucleoside 5'-triphosphate = DNA(n+1) + diphosphate. Its function is as follows. Part of the beta sliding clamp loading complex, which hydrolyzes ATP to load the beta clamp onto primed DNA to form the DNA replication pre-initiation complex. DNA polymerase III is a complex, multichain enzyme responsible for most of the replicative synthesis in bacteria. This DNA polymerase also exhibits 3' to 5' exonuclease activity. The protein is Probable DNA polymerase III subunit chi of Rickettsia prowazekii (strain Madrid E).